The chain runs to 1261 residues: AT-rich interactive domain-containing protein 4A (1261 aa).

The segment at 4–121 (ADEPAYLTVG…RHFAESETLD (118 aa)) is DNA-binding. Disordered regions lie at residues 142–169 (RGRR…DKRR), 273–310 (ESSS…LDPE), and 435–470 (APEM…PRGR). Composition is skewed to acidic residues over residues 151 to 165 (TEDE…EEDE) and 276 to 289 (SSDD…EHEE). The segment covering 290–299 (EKEKEAKKEE) has biased composition (basic and acidic residues). Positions 300-310 (EELPEEELDPE) are enriched in acidic residues. Residues 309 to 401 (PEERDNFLQQ…YLYGFEEYCR (93 aa)) form the ARID domain. Lys-481 is covalently cross-linked (Glycyl lysine isopeptide (Lys-Gly) (interchain with G-Cter in SUMO2)). Disordered regions lie at residues 498 to 582 (LENK…GTKV), 633 to 768 (WPLD…EAGD), and 842 to 953 (FSST…EDAM). The span at 512–522 (PAAKREHELLF) shows a compositional bias: basic and acidic residues. Over residues 526-536 (STPKNKEKKIK) the composition is skewed to basic residues. The segment covering 541 to 551 (SERDSDEEEEK) has biased composition (acidic residues). Residues 552 to 564 (SQEREETESRCDS) show a composition bias toward basic and acidic residues. Over residues 565-574 (EGEDEEDDTE) the composition is skewed to acidic residues. One can recognise a Tudor-knot domain in the interval 579 to 631 (GTKVKVKYGRGKTQKIYEASIKSTEMDDGEILYLVHYYGWNVRYDEWVKADRI). Positions 640–649 (PKKKQKKKVK) are enriched in basic residues. Residues 650–665 (NKEDSEKDEKRDEERQ) show a composition bias toward basic and acidic residues. Residues 676 to 689 (STFSPNMPYSLSKT) show a composition bias toward polar residues. At Ser-679 the chain carries Phosphoserine. Over residues 690–702 (SNSEGKSDSCSSD) the composition is skewed to low complexity. Positions 708–753 (QLEKSSGGEDLSPDVKEELEKNENAHDDKLDEENPKIVHISKENDR) are enriched in basic and acidic residues. Ser-719 carries the phosphoserine modification. Residues Lys-723 and Lys-743 each participate in a glycyl lysine isopeptide (Lys-Gly) (interchain with G-Cter in SUMO2) cross-link. Ser-867 is modified (phosphoserine). Basic and acidic residues-rich tracts occupy residues 899 to 909 (KGAHVEQHFET) and 929 to 947 (TSEK…TPLK). The segment at 955 to 968 (LIGPETLVCHEVDL) is retinoblastoma protein binding. Residues 1067-1080 (HERESREKGQKRPS) are compositionally biased toward basic and acidic residues. 2 disordered regions span residues 1067–1173 (HERE…RTYK) and 1216–1261 (RRRK…VECR). 2 positions are modified to phosphoserine: Ser-1113 and Ser-1149. A compositionally biased stretch (low complexity) spans 1230–1252 (HAGASMSSASSDTGMSPSSSSPP).

As to quaternary structure, identified in mSin3A corepressor complexes together with SIN3A, SIN3B, RBBP4, RBBP7, SAP30, BRMS1, HDAC1 and HDAC2. Interacts with BRMS1. Interacts with RB1. Interacts with ARID4B. Interacts with AR. As to expression, expressed in Sertoli cells of the testis.

It localises to the nucleus. DNA-binding protein which modulates activity of several transcription factors including RB1 (retinoblastoma-associated protein) and AR (androgen receptor). May function as part of an mSin3A repressor complex. Has no intrinsic transcriptional activity. Plays a role in the regulation of epigenetic modifications at the PWS/AS imprinting center near the SNRPN promoter, where it might function as part of a complex with RB1 and ARID4B. Involved in spermatogenesis, together with ARID4B, where it acts as a transcriptional coactivator for AR and enhances expression of genes required for sperm maturation. Regulates expression of the tight junction protein CLDN3 in the testis, which is important for integrity of the blood-testis barrier. Plays a role in myeloid homeostasis where it regulates the histone methylation state of bone marrow cells and expression of various genes involved in hematopoiesis. May function as a leukemia suppressor. The chain is AT-rich interactive domain-containing protein 4A from Mus musculus (Mouse).